A 985-amino-acid polypeptide reads, in one-letter code: Regulator of telomere elongation helicase 1 homolog (985 aa).

The region spanning 7–303 (AGIPVHFPFE…QDMAGDEPKD (297 aa)) is the Helicase ATP-binding domain. Residue 42 to 49 (SPTGTGKT) coordinates ATP. Residues cysteine 146, cysteine 164, cysteine 173, and cysteine 209 each contribute to the [4Fe-4S] cluster site. Residues 252–255 (DEAH) carry the DEAH box motif. The segment at 863-883 (VKIHKRERSSPTAPESSSQVT) is disordered. Residues 872 to 882 (SPTAPESSSQV) are compositionally biased toward polar residues. Threonine 874 is modified (phosphothreonine).

The protein belongs to the helicase family. RAD3/XPD subfamily. In terms of tissue distribution, expressed in both male germline and somatic cells (at protein level). Expressed in ovarian germline stem cells (at protein level). Expressed in adult testes (at protein level). Expressed in the germarium including germline stem cells.

The protein localises to the nucleus. It localises to the chromosome. It catalyses the reaction ATP + H2O = ADP + phosphate + H(+). A probable ATP-dependent DNA helicase implicated in DNA repair and the maintenance of genomic stability. Acts as an anti-recombinase to counteract toxic recombination and limit crossover during meiosis. Regulates meiotic recombination and crossover homeostasis by physically dissociating strand invasion events and thereby promotes noncrossover repair by meiotic synthesis dependent strand annealing (SDSA) as well as disassembly of D loop recombination intermediates. In male germline stem cells (GSCs), plays a role in GSCs maintenance during larval germline development by modulating the expression of genes such as Stat92E and preventing DNA damage-induced checkpoint activation. May play a role in female germline stem cell maintenance. This chain is Regulator of telomere elongation helicase 1 homolog, found in Drosophila melanogaster (Fruit fly).